The chain runs to 994 residues: Valine--tRNA ligase (994 aa).

The short motif at 43–53 (PNVTGTLHMGH) is the 'HIGH' region element. The interval 332–356 (IASGATSDTTDTPSDSDASNASNQH) is disordered. Residues 333–353 (ASGATSDTTDTPSDSDASNAS) are compositionally biased toward low complexity. A 'KMSKS' region motif is present at residues 585–589 (KMSKS). Lys-588 contacts ATP. The tract at residues 691-713 (TAHSPAQHQAGQDGQDVPRTPQP) is disordered. A coiled-coil region spans residues 928 to 994 (LIDVDAERAR…NGLRERRTTL (67 aa)).

The protein belongs to the class-I aminoacyl-tRNA synthetase family. ValS type 1 subfamily. As to quaternary structure, monomer.

Its subcellular location is the cytoplasm. It carries out the reaction tRNA(Val) + L-valine + ATP = L-valyl-tRNA(Val) + AMP + diphosphate. Catalyzes the attachment of valine to tRNA(Val). As ValRS can inadvertently accommodate and process structurally similar amino acids such as threonine, to avoid such errors, it has a 'posttransfer' editing activity that hydrolyzes mischarged Thr-tRNA(Val) in a tRNA-dependent manner. This chain is Valine--tRNA ligase, found in Xylella fastidiosa (strain M23).